A 278-amino-acid polypeptide reads, in one-letter code: Aquaporin NIP3-3 (278 aa).

2 consecutive transmembrane segments (helical) span residues V70 to M90 and T99 to I119. An NPA 1 motif is present at residues N127–A129. The next 3 membrane-spanning stretches (helical) occupy residues P141–V163, A185–T205, and L213–T233. The NPA 2 motif lies at N238–A240. A helical transmembrane segment spans residues I255–A275.

Belongs to the MIP/aquaporin (TC 1.A.8) family. NIP (TC 1.A.8.12) subfamily. In terms of tissue distribution, expressed in leaves and at lower levels in roots and anthers.

The protein localises to the membrane. Aquaporins facilitate the transport of water and small neutral solutes across cell membranes. The polypeptide is Aquaporin NIP3-3 (NIP3-3) (Oryza sativa subsp. japonica (Rice)).